Reading from the N-terminus, the 180-residue chain is ATP synthase subunit delta (180 aa).

It belongs to the ATPase delta chain family. F-type ATPases have 2 components, F(1) - the catalytic core - and F(0) - the membrane proton channel. F(1) has five subunits: alpha(3), beta(3), gamma(1), delta(1), epsilon(1). F(0) has three main subunits: a(1), b(2) and c(10-14). The alpha and beta chains form an alternating ring which encloses part of the gamma chain. F(1) is attached to F(0) by a central stalk formed by the gamma and epsilon chains, while a peripheral stalk is formed by the delta and b chains.

The protein resides in the cell inner membrane. Its function is as follows. F(1)F(0) ATP synthase produces ATP from ADP in the presence of a proton or sodium gradient. F-type ATPases consist of two structural domains, F(1) containing the extramembraneous catalytic core and F(0) containing the membrane proton channel, linked together by a central stalk and a peripheral stalk. During catalysis, ATP synthesis in the catalytic domain of F(1) is coupled via a rotary mechanism of the central stalk subunits to proton translocation. This protein is part of the stalk that links CF(0) to CF(1). It either transmits conformational changes from CF(0) to CF(1) or is implicated in proton conduction. This chain is ATP synthase subunit delta, found in Pelobacter propionicus (strain DSM 2379 / NBRC 103807 / OttBd1).